The chain runs to 431 residues: L-ornithine N(5)-monooxygenase (431 aa).

Residues 40-48 (EKLPTFSWH) and Q59 each bind FAD. Substrate is bound at residue K64. NADP(+)-binding positions include 202 to 205 (CGQS) and R228. Residues 242–245 (NSLY) and N273 contribute to the substrate site. 273–275 (NYS) provides a ligand contact to NADP(+). Position 399–401 (399–401 (TLL)) interacts with FAD. Substrate is bound at residue S402.

It belongs to the lysine N(6)-hydroxylase/L-ornithine N(5)-oxygenase family. It depends on FAD as a cofactor.

It is found in the cytoplasm. It localises to the nucleus. It catalyses the reaction L-ornithine + NADPH + O2 = N(5)-hydroxy-L-ornithine + NADP(+) + H2O. The catalysed reaction is L-ornithine + NADH + O2 = N(5)-hydroxy-L-ornithine + NAD(+) + H2O. It functions in the pathway siderophore biosynthesis; ferrichrome biosynthesis. Catalyzes the conversion of L-ornithine to N(5)-hydroxyornithine, the first step in the biosynthesis of all hydroxamate-containing siderophores, such as ferrichrome. In Schizosaccharomyces pombe (strain 972 / ATCC 24843) (Fission yeast), this protein is L-ornithine N(5)-monooxygenase.